Here is a 1407-residue protein sequence, read N- to C-terminus: DNA-directed RNA polymerase subunit beta' (1407 aa).

Residues Cys70, Cys72, Cys85, and Cys88 each contribute to the Zn(2+) site. Mg(2+)-binding residues include Asp460, Asp462, and Asp464. The Zn(2+) site is built by Cys814, Cys888, Cys895, and Cys898. Position 972 is an N6-acetyllysine (Lys972).

This sequence belongs to the RNA polymerase beta' chain family. As to quaternary structure, the RNAP catalytic core consists of 2 alpha, 1 beta, 1 beta' and 1 omega subunit. When a sigma factor is associated with the core the holoenzyme is formed, which can initiate transcription. Requires Mg(2+) as cofactor. Zn(2+) serves as cofactor.

It catalyses the reaction RNA(n) + a ribonucleoside 5'-triphosphate = RNA(n+1) + diphosphate. In terms of biological role, DNA-dependent RNA polymerase catalyzes the transcription of DNA into RNA using the four ribonucleoside triphosphates as substrates. The sequence is that of DNA-directed RNA polymerase subunit beta' from Shigella dysenteriae serotype 1 (strain Sd197).